The primary structure comprises 293 residues: Epidermal growth factor-like protein 8 (293 aa).

The N-terminal stretch at 1 to 28 is a signal peptide; it reads MGLWAELCISLRGLSFFLVLMTGEGTRG. In terms of domain architecture, EMI spans 34 to 112; that stretch reads SLGVCSKQTL…PHPGALTCDA (79 aa). Disulfide bonds link Cys-38–Cys-97, Cys-65–Cys-71, Cys-96–Cys-110, Cys-114–Cys-124, Cys-118–Cys-130, Cys-132–Cys-141, Cys-148–Cys-159, Cys-155–Cys-168, and Cys-170–Cys-183. The N-linked (GlcNAc...) asparagine glycan is linked to Asn-50. Residues 111 to 142 enclose the EGF-like 1 domain; the sequence is DAICSKPCLNGGVCTGPDRCECAPGWGGKHCH. The region spanning 144-184 is the EGF-like 2; calcium-binding domain; sequence DVDECRASLTLCSHGCLNTLGSFLCSCPHPLVLGLDGRTCA. A coiled-coil region spans residues 206–235; sequence SEEERALRWEVAELRGRLEKLEQWATQAGA.

As to expression, ubiquitously expressed in brain, kidney, thymus and lung.

Its subcellular location is the secreted. This is Epidermal growth factor-like protein 8 (Egfl8) from Mus musculus (Mouse).